The primary structure comprises 921 residues: Inner nuclear membrane protein Man1 (921 aa).

The LEM domain maps to 7 to 51 (AAAPQQLSDEELFSQLRRYGLSPGPVTESTRPVYLKKLKKLREEE). Ser28 is modified (phosphoserine). Disordered regions lie at residues 47 to 97 (LREE…AYLR), 136 to 357 (SSDE…GGCG), and 374 to 395 (LAPL…PTGP). Low complexity-rich tracts occupy residues 53-62 (QQQQQQQQQQ) and 72-85 (TRNS…TAMG). Phosphoserine occurs at positions 136, 137, and 140. Positions 217–237 (AAEDADEELADGEDRDPEAEE) are enriched in acidic residues. Residues Ser261, Ser263, and Ser287 each carry the phosphoserine modification. Over residues 263 to 275 (SEEEEEEGEEDGD) the composition is skewed to acidic residues. Positions 308–317 (SGGSRQETSV) are enriched in polar residues. Gly residues predominate over residues 348-357 (PGGGGGGGCG). Ser412 is modified (phosphoserine). Helical transmembrane passes span 486 to 506 (MFLL…YLGM) and 637 to 657 (AFIT…LVCV). The tract at residues 709-921 (VRDSLIQPQD…TGLANSQGSS (213 aa)) is interaction with SMAD1, SMAD2, SMAD3 and SMAD5. Residues 717–736 (QDRKKMKKVWDRAVDFLAAN) mediate DNA binding. The residue at position 787 (Ser787) is a Phosphoserine. Thr893 carries the phosphothreonine modification. A Phosphoserine modification is found at Ser921.

As to quaternary structure, interacts with SMAD1, SMAD2, SMAD3 and SMAD5. Binds to both phosphorylated and unphosphorylated R-SMADS.

The protein localises to the nucleus inner membrane. In terms of biological role, can function as a specific repressor of TGF-beta, activin, and BMP signaling through its interaction with the R-SMAD proteins. Antagonizes TGF-beta-induced cell proliferation arrest. In Mus musculus (Mouse), this protein is Inner nuclear membrane protein Man1 (Lemd3).